A 797-amino-acid polypeptide reads, in one-letter code: Kinesin-like protein Klp68D (797 aa).

Positions cysteine 19–isoleucine 344 constitute a Kinesin motor domain. Glycine 106–threonine 113 lines the ATP pocket. Residues lysine 350–glutamine 384 adopt a coiled-coil conformation. 3 disordered regions span residues arginine 371–arginine 450, serine 610–leucine 656, and alanine 722–lysine 797. The segment covering threonine 386–lysine 396 has biased composition (basic residues). Over residues glutamine 417–serine 431 the composition is skewed to acidic residues. The segment covering glutamate 432 to arginine 450 has biased composition (basic and acidic residues). The stretch at glutamate 432–leucine 580 forms a coiled coil. Positions glycine 626–arginine 638 are enriched in basic residues. Residues lysine 782 to alanine 791 show a composition bias toward low complexity.

The protein belongs to the TRAFAC class myosin-kinesin ATPase superfamily. Kinesin family. Kinesin II subfamily.

The protein localises to the cytoplasm. The protein resides in the cytoskeleton. Its function is as follows. Plus-end directed microtubule motor that may be used for anterograde axonal transport and could conceivably move cargos in fly neurons different than those moved by kinesin heavy chain or other plus-end directed motors. The polypeptide is Kinesin-like protein Klp68D (Drosophila pseudoobscura pseudoobscura (Fruit fly)).